Here is a 185-residue protein sequence, read N- to C-terminus: Ribosome-recycling factor (185 aa).

Belongs to the RRF family.

The protein resides in the cytoplasm. In terms of biological role, responsible for the release of ribosomes from messenger RNA at the termination of protein biosynthesis. May increase the efficiency of translation by recycling ribosomes from one round of translation to another. This Nocardia farcinica (strain IFM 10152) protein is Ribosome-recycling factor.